A 126-amino-acid polypeptide reads, in one-letter code: Prefoldin subunit beta (126 aa).

The protein belongs to the prefoldin subunit beta family. As to quaternary structure, heterohexamer of two alpha and four beta subunits.

Its subcellular location is the cytoplasm. Its function is as follows. Molecular chaperone capable of stabilizing a range of proteins. Seems to fulfill an ATP-independent, HSP70-like function in archaeal de novo protein folding. In Saccharolobus islandicus (strain Y.N.15.51 / Yellowstone #2) (Sulfolobus islandicus), this protein is Prefoldin subunit beta.